We begin with the raw amino-acid sequence, 690 residues long: Ligand of Numb protein X 2 (690 aa).

The RING-type zinc-finger motif lies at 50 to 88 (CHICLQPLLQPLDTPCGHTFCYKCLRNFLQEKDFCPLDR). A disordered region spans residues 198–224 (STWSEEPGLDNPAFEESAGADTTQQPL). Residues 208-211 (NPAF) carry the NPXY motif motif. PDZ domains are found at residues 233–318 (TIEI…LRER), 339–422 (QVAL…ARPG), 468–554 (HITV…KALE), and 600–688 (DIVL…WPGS). The disordered stretch occupies residues 418–455 (IARPGKPQPGNTIREAGNHSSSSQHHTPPPYYSRPSSH).

Interacts with the phosphotyrosine interaction domain of NUMB.

The protein is Ligand of Numb protein X 2 (LNX2) of Homo sapiens (Human).